The primary structure comprises 309 residues: Ribonuclease Z (309 aa).

Zn(2+) is bound by residues His-63, His-65, Asp-67, His-68, His-145, Asp-216, and His-274. The active-site Proton acceptor is the Asp-67.

The protein belongs to the RNase Z family. In terms of assembly, homodimer. The cofactor is Zn(2+).

It catalyses the reaction Endonucleolytic cleavage of RNA, removing extra 3' nucleotides from tRNA precursor, generating 3' termini of tRNAs. A 3'-hydroxy group is left at the tRNA terminus and a 5'-phosphoryl group is left at the trailer molecule.. In terms of biological role, zinc phosphodiesterase, which displays some tRNA 3'-processing endonuclease activity. Probably involved in tRNA maturation, by removing a 3'-trailer from precursor tRNA. In Streptococcus equi subsp. zooepidemicus (strain H70), this protein is Ribonuclease Z.